We begin with the raw amino-acid sequence, 573 residues long: Chromosomal replication initiator protein DnaA (573 aa).

Residues 1-85 (MSQNSSSLLE…TKVLSMRMGR (85 aa)) form a domain I, interacts with DnaA modulators region. The tract at residues 85–231 (RSFSLAVSVE…TPAHNPNREV (147 aa)) is domain II. Residues 91–232 (VSVEPSRDGE…PAHNPNREVS (142 aa)) are disordered. Over residues 116-169 (PYPGQGPQSPQGQQGQQGQHPVQQEVRAHAPAPHQQGQHQAAQHQPPANQAPGQ) the composition is skewed to low complexity. A compositionally biased stretch (polar residues) spans 178–191 (QASQSAGAWEQTHS). Positions 202-213 (SPAPVEPPPQPA) are enriched in pro residues. Positions 232–448 (SLNPKYTFEN…GALIRVSAYS (217 aa)) are domain III, AAA+ region. ATP is bound by residues glycine 276, glycine 278, lysine 279, and threonine 280. The interval 449–573 (SLINQPIDKE…TQLIKSRGRN (125 aa)) is domain IV, binds dsDNA.

It belongs to the DnaA family. Oligomerizes as a right-handed, spiral filament on DNA at oriC.

It is found in the cytoplasm. Its function is as follows. Plays an essential role in the initiation and regulation of chromosomal replication. ATP-DnaA binds to the origin of replication (oriC) to initiate formation of the DNA replication initiation complex once per cell cycle. Binds the DnaA box (a 9 base pair repeat at the origin) and separates the double-stranded (ds)DNA. Forms a right-handed helical filament on oriC DNA; dsDNA binds to the exterior of the filament while single-stranded (ss)DNA is stabiized in the filament's interior. The ATP-DnaA-oriC complex binds and stabilizes one strand of the AT-rich DNA unwinding element (DUE), permitting loading of DNA polymerase. After initiation quickly degrades to an ADP-DnaA complex that is not apt for DNA replication. Binds acidic phospholipids. The protein is Chromosomal replication initiator protein DnaA of Corynebacterium efficiens (strain DSM 44549 / YS-314 / AJ 12310 / JCM 11189 / NBRC 100395).